The primary structure comprises 149 residues: Glycophorin-A (149 aa).

An N-terminal signal peptide occupies residues 1–19 (MYGKIIFVLLLSAIVSISA). The Extracellular segment spans residues 20–90 (SSTTEVAMHT…QLVHRFSEPE (71 aa)). The O-linked (GalNAc...) serine glycan is linked to Ser-21. 3 O-linked (GalNAc...) threonine glycosylation sites follow: Thr-22, Thr-23, and Thr-29. Residue Ser-30 is glycosylated (O-linked (GalNAc...) serine). The O-linked (GalNAc...) threonine glycan is linked to Thr-31. An O-linked (GalNAc...) serine glycan is attached at Ser-32. Thr-35 carries an O-linked (GalNAc...) threonine glycan. O-linked (GalNAc...) serine glycans are attached at residues Ser-37 and Ser-40. Thr-43 carries O-linked (GalNAc...) threonine glycosylation. O-linked (GalNAc...) serine glycosylation is present at Ser-44. Thr-51 and Thr-55 each carry an O-linked (GalNAc...) threonine glycan. Ser-62 is a glycosylation site (O-linked (GalNAc...) serine). Residue Thr-68 is glycosylated (O-linked (GalNAc...) threonine). A helical transmembrane segment spans residues 91-113 (ITLIIFGVMAGVIGTILLIYYSI). The Cytoplasmic segment spans residues 114–149 (RRLIKKSPSDVKPLPSPDTDVPLSSVEIENPETSDQ). Residues 122–149 (SDVKPLPSPDTDVPLSSVEIENPETSDQ) are disordered. Phosphoserine is present on residues Ser-137 and Ser-147.

The protein belongs to the glycophorin-A family. In terms of assembly, homodimer. Component of the ankyrin-1 complex in the erythrocyte, composed of ANK1, RHCE, RHAG, SLC4A1, EPB42, GYPA, GYPB and AQP1. Interacts with SLC4A1; a GYPA monomer is bound at each end of the SLC4A1 dimer forming a heterotetramer.

Its subcellular location is the cell membrane. In terms of biological role, component of the ankyrin-1 complex, a multiprotein complex involved in the stability and shape of the erythrocyte membrane. Glycophorin A is the major intrinsic membrane protein of the erythrocyte. The N-terminal glycosylated segment, which lies outside the erythrocyte membrane, has MN blood group receptors. Appears to be important for the function of SLC4A1 and is required for high activity of SLC4A1. May be involved in translocation of SLC4A1 to the plasma membrane. The polypeptide is Glycophorin-A (Pan troglodytes (Chimpanzee)).